The sequence spans 316 residues: Glucan endo-1,3-beta-glucosidase GV (316 aa).

The active-site Proton donor is the glutamate 99. The active-site Nucleophile is glutamate 239.

Belongs to the glycosyl hydrolase 17 family.

It is found in the cytoplasm. The catalysed reaction is Hydrolysis of (1-&gt;3)-beta-D-glucosidic linkages in (1-&gt;3)-beta-D-glucans.. May provide a degree of protection against microbial invasion of germinated barley grain through its ability to degrade fungal cell wall polysaccharides. The chain is Glucan endo-1,3-beta-glucosidase GV from Hordeum vulgare (Barley).